The chain runs to 327 residues: Microtubule-associated protein RP/EB family member 2 (327 aa).

The segment at 1–21 is disordered; that stretch reads MPGPTQTLSPNGENNNDIIQD. At P2 the chain carries N-acetylalanine. Position 9 is a phosphoserine (S9). The region spanning 57-159 is the Calponin-homology (CH) domain; sequence TMSRHDIIAW…FIQWFKKFYD (103 aa). Y167 carries the post-translational modification Phosphotyrosine. 2 disordered regions span residues 171-240 and 299-327; these read EARQ…DKDL and ASEE…QEEY. The segment at 187–327 is DCTN1-binding; it reads QIFNLPKKSH…EQQPPQQEEY (141 aa). Positions 200–234 are enriched in low complexity; the sequence is SPTAGAAKSSPAAKPGSTPSRPSSAKRASSSGSAS. Residues S219 and S236 each carry the phosphoserine modification. Residues 236 to 306 form the EB1 C-terminal domain; the sequence is SDKDLETQVI…LYASEEHEGH (71 aa). The tract at residues 259–302 is APC-binding; the sequence is EGVEKERDFYFGKLREIELLCQEHGQENDDLVQRLMDILYASEE. A compositionally biased stretch (basic and acidic residues) spans 300–317; it reads SEEHEGHTEEPEAEEQAH. The span at 318-327 shows a compositional bias: low complexity; that stretch reads EQQPPQQEEY.

It belongs to the MAPRE family. As to quaternary structure, interacts with DCTN1. Interacts with APC (via C-terminal). Interacts with monomeric and polymerized tubulin. Interacts with SLAIN1. Interacts (via the N-terminal region) with BAG1. Interacts with ASB14. Interacts with HAX1; this interaction is essential for epidermal cell migration. In terms of processing, phosphorylated at Ser-236 by CK2 leading to enhanced cell adhesion. Phosphorylated by CDK1 and AURKB during mitosis reduces the binding affinity of MAPRE2 for microtubules. Ubiquitinated in an ASB14-dependent manner; leading to proteasomal degradation. As to expression, expressed in different tumor cell lines. Up-regulated in activated B- and T-lymphocytes.

It localises to the cytoplasm. The protein localises to the cytoskeleton. In terms of biological role, adapter protein that is involved in microtubule polymerization, and spindle function by stabilizing microtubules and anchoring them at centrosomes. Therefore, ensures mitotic progression and genome stability. Acts as a central regulator of microtubule reorganization in apico-basal epithelial differentiation. Plays a role during oocyte meiosis by regulating microtubule dynamics. Participates in neurite growth by interacting with plexin B3/PLXNB3 and microtubule reorganization during apico-basal epithelial differentiation. Also plays an essential role for cell migration and focal adhesion dynamics. Mechanistically, recruits HAX1 to microtubules in order to regulate focal adhesion dynamics. This Homo sapiens (Human) protein is Microtubule-associated protein RP/EB family member 2 (MAPRE2).